The primary structure comprises 421 residues: Tyrosine--tRNA ligase (421 aa).

Residue tyrosine 35 coordinates L-tyrosine. Residues 40-49 (PTGPSLHAGH) carry the 'HIGH' region motif. L-tyrosine contacts are provided by tyrosine 169 and glutamine 173. A 'KMSKS' region motif is present at residues 229–233 (KFGKS). Residue lysine 232 participates in ATP binding. The S4 RNA-binding domain occupies 354–420 (RTIVDLLIAS…GKKNFAGVKI (67 aa)).

The protein belongs to the class-I aminoacyl-tRNA synthetase family. TyrS type 1 subfamily. As to quaternary structure, homodimer.

The protein resides in the cytoplasm. The enzyme catalyses tRNA(Tyr) + L-tyrosine + ATP = L-tyrosyl-tRNA(Tyr) + AMP + diphosphate + H(+). Catalyzes the attachment of tyrosine to tRNA(Tyr) in a two-step reaction: tyrosine is first activated by ATP to form Tyr-AMP and then transferred to the acceptor end of tRNA(Tyr). The polypeptide is Tyrosine--tRNA ligase (Corynebacterium efficiens (strain DSM 44549 / YS-314 / AJ 12310 / JCM 11189 / NBRC 100395)).